The sequence spans 443 residues: 3-ketoacyl-CoA thiolase 1, peroxisomal (443 aa).

Residues 1–30 (MEKATERQRILLRHLQPSSSSDASLSASAC) constitute a peroxisome transit peptide. Cys130 acts as the Acyl-thioester intermediate in catalysis. Catalysis depends on proton acceptor residues His385 and Cys417.

The protein belongs to the thiolase-like superfamily. Thiolase family. In terms of assembly, homodimer. Low levels in seedlings and leaves.

The protein localises to the peroxisome. The enzyme catalyses an acyl-CoA + acetyl-CoA = a 3-oxoacyl-CoA + CoA. The protein operates within lipid metabolism; fatty acid metabolism. Its function is as follows. Involved in fatty-acid beta-oxidation prior to gluconeogenesis during germination and subsequent seedling growth. Implicated in jasmonic acid (JA) biosynthesis. This is 3-ketoacyl-CoA thiolase 1, peroxisomal (KAT1) from Arabidopsis thaliana (Mouse-ear cress).